The following is a 414-amino-acid chain: Serine hydroxymethyltransferase (414 aa).

(6S)-5,6,7,8-tetrahydrofolate is bound by residues Leu-117 and 121–123 (GHL). Position 226 is an N6-(pyridoxal phosphate)lysine (Lys-226). 349 to 351 (SPF) serves as a coordination point for (6S)-5,6,7,8-tetrahydrofolate.

The protein belongs to the SHMT family. Homodimer. It depends on pyridoxal 5'-phosphate as a cofactor.

The protein resides in the cytoplasm. It carries out the reaction (6R)-5,10-methylene-5,6,7,8-tetrahydrofolate + glycine + H2O = (6S)-5,6,7,8-tetrahydrofolate + L-serine. It participates in one-carbon metabolism; tetrahydrofolate interconversion. The protein operates within amino-acid biosynthesis; glycine biosynthesis; glycine from L-serine: step 1/1. In terms of biological role, catalyzes the reversible interconversion of serine and glycine with tetrahydrofolate (THF) serving as the one-carbon carrier. This reaction serves as the major source of one-carbon groups required for the biosynthesis of purines, thymidylate, methionine, and other important biomolecules. Also exhibits THF-independent aldolase activity toward beta-hydroxyamino acids, producing glycine and aldehydes, via a retro-aldol mechanism. This is Serine hydroxymethyltransferase from Desulfovibrio desulfuricans (strain ATCC 27774 / DSM 6949 / MB).